We begin with the raw amino-acid sequence, 390 residues long: Bibenzyl synthase (390 aa).

Residue Cys-164 is part of the active site.

The protein belongs to the thiolase-like superfamily. Chalcone/stilbene synthases family.

It carries out the reaction 3-(3-hydroxyphenyl)-propanoyl-CoA + 3 malonyl-CoA + 3 H(+) = 3,3',5-trihydroxybibenzyl + 4 CO2 + 4 CoA. The chain is Bibenzyl synthase (BIBSY212) from Phalaenopsis sp. (Moth orchid).